Reading from the N-terminus, the 375-residue chain is Tyrosine--tRNA ligase (375 aa).

L-tyrosine is bound by residues Tyr-37, Tyr-168, Gln-172, Asp-175, and Gln-190. Residues 251–255 carry the 'KMSKS' region motif; it reads KMSKS. Position 254 (Lys-254) interacts with ATP.

The protein belongs to the class-I aminoacyl-tRNA synthetase family. TyrS type 4 subfamily. As to quaternary structure, homodimer.

The protein localises to the cytoplasm. It carries out the reaction tRNA(Tyr) + L-tyrosine + ATP = L-tyrosyl-tRNA(Tyr) + AMP + diphosphate + H(+). Functionally, catalyzes the attachment of tyrosine to tRNA(Tyr) in a two-step reaction: tyrosine is first activated by ATP to form Tyr-AMP and then transferred to the acceptor end of tRNA(Tyr). The protein is Tyrosine--tRNA ligase of Pyrococcus furiosus (strain ATCC 43587 / DSM 3638 / JCM 8422 / Vc1).